The primary structure comprises 464 residues: Argininosuccinate lyase (464 aa).

It belongs to the lyase 1 family. Argininosuccinate lyase subfamily.

The protein resides in the cytoplasm. The enzyme catalyses 2-(N(omega)-L-arginino)succinate = fumarate + L-arginine. It participates in amino-acid biosynthesis; L-arginine biosynthesis; L-arginine from L-ornithine and carbamoyl phosphate: step 3/3. The polypeptide is Argininosuccinate lyase (Frankia casuarinae (strain DSM 45818 / CECT 9043 / HFP020203 / CcI3)).